The following is a 371-amino-acid chain: Zygote-specific protein 3 (371 aa).

Residues 1 to 24 (MLRSAGRVAAVALLALFALGCVSA) form the signal peptide. A glycan (N-linked (GlcNAc...) asparagine) is linked at asparagine 41. ANK repeat units follow at residues 62-91 (TRRL…LARV) and 94-123 (GTTT…DPNA). WW domains are found at residues 159–187 (EPGA…WAVP) and 283–313 (YATP…WELP).

It is found in the endoplasmic reticulum lumen. Its function is as follows. May have a role in the remodeling of the endoplasmic reticulum upon zygote formation. The sequence is that of Zygote-specific protein 3 (ZYS3) from Chlamydomonas reinhardtii (Chlamydomonas smithii).